Here is a 458-residue protein sequence, read N- to C-terminus: Protein U54 (458 aa).

N-linked (GlcNAc...) asparagine; by host glycosylation is found at asparagine 76, asparagine 102, asparagine 281, asparagine 321, asparagine 346, asparagine 434, and asparagine 451.

It belongs to the herpesviridae UL82 family.

The chain is Protein U54 (U54) from Homo sapiens (Human).